Consider the following 188-residue polypeptide: Elongation factor P (188 aa).

N6-(3,6-diaminohexanoyl)-5-hydroxylysine is present on lysine 34.

The protein belongs to the elongation factor P family. In terms of processing, may be beta-lysylated on the epsilon-amino group of Lys-34 by the combined action of EpmA and EpmB, and then hydroxylated on the C5 position of the same residue by EpmC (if this protein is present). Lysylation is critical for the stimulatory effect of EF-P on peptide-bond formation. The lysylation moiety may extend toward the peptidyltransferase center and stabilize the terminal 3-CCA end of the tRNA. Hydroxylation of the C5 position on Lys-34 may allow additional potential stabilizing hydrogen-bond interactions with the P-tRNA.

The protein localises to the cytoplasm. It functions in the pathway protein biosynthesis; polypeptide chain elongation. Its function is as follows. Involved in peptide bond synthesis. Alleviates ribosome stalling that occurs when 3 or more consecutive Pro residues or the sequence PPG is present in a protein, possibly by augmenting the peptidyl transferase activity of the ribosome. Modification of Lys-34 is required for alleviation. In Vibrio parahaemolyticus serotype O3:K6 (strain RIMD 2210633), this protein is Elongation factor P.